The chain runs to 978 residues: Calsyntenin-1 (978 aa).

The first 26 residues, 1–26, serve as a signal peptide directing secretion; it reads MTFHKTFGYGCIVLICFELLFAGVET. Residues 27–876 lie on the Extracellular side of the membrane; sequence SSENDDEYLT…SFIHKAEGSH (850 aa). 2 consecutive Cadherin domains span residues 37–143 and 144–249; these read QKEI…APTF and LEPS…MPER. N-linked (GlcNAc...) asparagine glycosylation is present at Asn53. Asn304, Asn486, Asn608, and Asn823 each carry an N-linked (GlcNAc...) asparagine glycan. The helical transmembrane segment at 877-897 threads the bilayer; the sequence is VTMLIILVSVFLAVLLCGVSI. Residues 898-978 are Cytoplasmic-facing; that stretch reads ARLKNNQKYI…EWDNSNIFQQ (81 aa). Residues 937 to 958 are disordered; the sequence is ADVTSDASSESENSESEDEEAL. The span at 948–957 shows a compositional bias: acidic residues; it reads ENSESEDEEA.

Belongs to the calsyntenin family.

The protein resides in the postsynaptic cell membrane. Its function is as follows. Postsynaptic adhesion molecule that binds to presynaptic neurexins to mediate both excitatory and inhibitory synapse formation. Promotes synapse development by acting as a cell adhesion molecule at the postsynaptic membrane, which associates with neurexin-alpha at the presynaptic membrane. The sequence is that of Calsyntenin-1 (Cals) from Drosophila melanogaster (Fruit fly).